A 338-amino-acid chain; its full sequence is Glycerol-3-phosphate dehydrogenase [NAD(P)+] (338 aa).

NADPH contacts are provided by S14, F15, R35, and K109. Sn-glycerol 3-phosphate is bound by residues K109 and G137. Position 141 (A141) interacts with NADPH. Residues K192, D247, S257, R258, and N259 each coordinate sn-glycerol 3-phosphate. K192 functions as the Proton acceptor in the catalytic mechanism. R258 serves as a coordination point for NADPH. Residues L282 and E284 each contribute to the NADPH site.

The protein belongs to the NAD-dependent glycerol-3-phosphate dehydrogenase family.

Its subcellular location is the cytoplasm. The catalysed reaction is sn-glycerol 3-phosphate + NAD(+) = dihydroxyacetone phosphate + NADH + H(+). The enzyme catalyses sn-glycerol 3-phosphate + NADP(+) = dihydroxyacetone phosphate + NADPH + H(+). The protein operates within membrane lipid metabolism; glycerophospholipid metabolism. In terms of biological role, catalyzes the reduction of the glycolytic intermediate dihydroxyacetone phosphate (DHAP) to sn-glycerol 3-phosphate (G3P), the key precursor for phospholipid synthesis. In Rickettsia rickettsii (strain Iowa), this protein is Glycerol-3-phosphate dehydrogenase [NAD(P)+].